Here is a 281-residue protein sequence, read N- to C-terminus: 32 kDa heat shock protein (281 aa).

Over residues 142-168 (EDDEEIDSDEEFGDSDQDEEDSDDEEI) the composition is skewed to acidic residues. The interval 142 to 281 (EDDEEIDSDE…NENNKKKQKN (140 aa)) is disordered. Residues 180 to 209 (KITEISEVPESKKEKTPEPKKVPEPKKEQV) are compositionally biased toward basic and acidic residues. Residues 210-273 (KQPTQPQQKK…NNKRPQNQNE (64 aa)) are compositionally biased toward low complexity.

The protein is 32 kDa heat shock protein (hspC) of Dictyostelium discoideum (Social amoeba).